The primary structure comprises 297 residues: MEEKQILCVGLVVLDVISLVDKYPKEDSEIRCLSQRWQRGGNASNSCTVLSLLGAPCAFMGSMAPGHVAFLVADFRRRGVDVSQVAWQSKGDTPSSCCIINNSNGNRTIVLHDTSLPDVSATDFEKVDLTQFKWIHIEGRNASEQVKMLQRIDTHNTRQPPEQKIRVSVEVEKPQEELFQLFGYGDVVFVSKDVAKHLGFQSAEAALRGLYGRVRKGAVLVCAWAEEGADALGPDDKLFHSDAFPPPRVVDTLGAGDTFNASVIFSLSQGRSMQEALRFGCQVAGKKCGLQGFDGIV.

The beta-D-fructose site is built by Asp-15, Gly-41, Asn-42, and Asn-45. Residues Arg-107, 225-228 (AEEG), and 254-257 (GAGD) contribute to the ATP site. Position 257 (Asp-257) interacts with beta-D-fructose.

Belongs to the carbohydrate kinase PfkB family. Homodimer.

The catalysed reaction is beta-D-fructose + ATP = beta-D-fructose 1-phosphate + ADP + H(+). It participates in carbohydrate metabolism; fructose metabolism. Requires potassium. Inhibition by ADP. In terms of biological role, catalyzes the phosphorylation of the ketose sugar fructose to fructose-1-phosphate. The sequence is that of Ketohexokinase (KHK) from Pongo abelii (Sumatran orangutan).